Reading from the N-terminus, the 399-residue chain is Glycosyltransferase BC10 (399 aa).

The Cytoplasmic segment spans residues 1-17 (MKPPRRWMYGRGGGKGK). Residues 18 to 38 (PAGLLLLGVFLCLSVVLLLLL) form a helical; Signal-anchor for type II membrane protein membrane-spanning segment. At 39–399 (HGSSPSLEGE…LIAANGASTM (361 aa)) the chain is on the lumenal side. Asn142 and Asn188 each carry an N-linked (GlcNAc...) asparagine glycan.

This sequence belongs to the glycosyltransferase 14 family. In terms of tissue distribution, expressed in roots, culms, leaves and panicles. Expressed in vascular bundles of leaf sheaths and stems where sclerenchyma cells are developing. Expressed in mechanical tissues of young organs, such as young leaf sheaths, stems and tiller buds.

The protein resides in the membrane. In terms of biological role, glycosyltransferase required for the regulation of cellulose biosynthesis in the cell wall. Required for the biosynthesis of hexoses (glucose, mannose and galactose) in both cellulosic and non-cellulosic (pectins and hemicelluloses) components of cell walls. Required for the formation of arabinogalactan proteins which contribute to the strengthening of cell walls. Possesses low glycosyltransferase activity. This Oryza sativa subsp. japonica (Rice) protein is Glycosyltransferase BC10.